The sequence spans 546 residues: Alpha-taxilin (546 aa).

Disordered regions lie at residues 1–170 (MKNQ…GLGK) and 482–546 (NKRV…SARA). A compositionally biased stretch (polar residues) spans 11 to 21 (AKQSNPKSSPG). 2 stretches are compositionally biased toward basic and acidic residues: residues 70–80 (DVSEELSRQLE) and 143–158 (EEIR…DHRR). Serine 72 bears the Phosphoserine mark. A coiled-coil region spans residues 186-491 (EEKLAALCKK…NKRVQDLSAG (306 aa)). At serine 515 the chain carries Phosphoserine. Polar residues predominate over residues 530 to 546 (TEASGQTGPQEPTSARA).

The protein belongs to the taxilin family. In terms of assembly, binds to the C-terminal coiled coil region of syntaxin family members STX1A, STX3A and STX4A, but not when these proteins are complexed with SNAP25, VAMP2 or STXBP1, suggesting that it interacts with syntaxins that do not form the SNARE complex. Ubiquitous, with much higher expression in heart, kidney, liver and pancreas.

May be involved in intracellular vesicle traffic and potentially in calcium-dependent exocytosis in neuroendocrine cells. This is Alpha-taxilin (TXLNA) from Homo sapiens (Human).